A 619-amino-acid chain; its full sequence is Zinc finger and BTB domain-containing protein 7C (619 aa).

One can recognise a BTB domain in the interval 34–101 (CDVLLVVQEQ…AYTSTLTITA (68 aa)). Residues 129-218 (PGGDGGEEDD…DSFQAGSPGH (90 aa)) form a disordered region. The span at 133 to 173 (GGEEDDKEDDDDDEDDDDEEDEEEEEEEEEDDDDDTEDFAD) shows a compositional bias: acidic residues. Residues 191–208 (KTDHLTEKAYSDTPRDFP) are compositionally biased toward basic and acidic residues. 3 consecutive C2H2-type zinc fingers follow at residues 364-386 (QQCP…MRTH), 392-414 (YMCT…MRKH), and 420-442 (YLCI…MRIH). A C2H2-type 4; degenerate zinc finger spans residues 448–478 (YQCEFCYKSFTRSDHLHRHIKRQSCRMARPR).

Detected in normal cervical keratinocytes, and in some cervical carcinoma cell lines.

May be a tumor suppressor gene. The polypeptide is Zinc finger and BTB domain-containing protein 7C (ZBTB7C) (Homo sapiens (Human)).